A 120-amino-acid chain; its full sequence is NAD(P)H-quinone oxidoreductase subunit 3, chloroplastic (120 aa).

3 helical membrane-spanning segments follow: residues 9 to 29 (IFWA…LISG), 64 to 84 (MFAL…PWAM), and 88 to 108 (VLGV…ILGL).

This sequence belongs to the complex I subunit 3 family. In terms of assembly, NDH is composed of at least 16 different subunits, 5 of which are encoded in the nucleus.

The protein localises to the plastid. It is found in the chloroplast thylakoid membrane. It catalyses the reaction a plastoquinone + NADH + (n+1) H(+)(in) = a plastoquinol + NAD(+) + n H(+)(out). The enzyme catalyses a plastoquinone + NADPH + (n+1) H(+)(in) = a plastoquinol + NADP(+) + n H(+)(out). Its function is as follows. NDH shuttles electrons from NAD(P)H:plastoquinone, via FMN and iron-sulfur (Fe-S) centers, to quinones in the photosynthetic chain and possibly in a chloroplast respiratory chain. The immediate electron acceptor for the enzyme in this species is believed to be plastoquinone. Couples the redox reaction to proton translocation, and thus conserves the redox energy in a proton gradient. The chain is NAD(P)H-quinone oxidoreductase subunit 3, chloroplastic from Arabidopsis thaliana (Mouse-ear cress).